The primary structure comprises 467 residues: Cell division protein FtsP (467 aa).

The tat-type signal signal peptide spans 1–28; sequence MRSLTRRDFLKSGILASSLSCIPQSVMA.

It belongs to the FtsP family. In terms of processing, predicted to be exported by the Tat system. The position of the signal peptide cleavage has not been experimentally proven.

The protein resides in the periplasm. Cell division protein that is required for growth during stress conditions. May be involved in protecting or stabilizing the divisomal assembly under conditions of stress. The protein is Cell division protein FtsP of Histophilus somni (strain 2336) (Haemophilus somnus).